We begin with the raw amino-acid sequence, 382 residues long: Sad1-interacting factor 2 (382 aa).

A Phosphoserine modification is found at serine 135. The chain crosses the membrane as a helical span at residues 356–376 (EWIVVILMGLLVLIALFSIVV).

It belongs to the RMD1/sif2 family. Interacts with sad1.

The protein localises to the nucleus membrane. In terms of biological role, required for sporulation where it is believed to have a role in meiotic nuclear division. The chain is Sad1-interacting factor 2 (sif2) from Schizosaccharomyces pombe (strain 972 / ATCC 24843) (Fission yeast).